The sequence spans 449 residues: MFQTINEISIHPELYNQKKVLIQGWITNIRGNLKIIFVELNDGSSFKNLQCVLKKEFIDFDKIENLALGVAVEISGIFSNTPERQQFGEVLVETLEIKGNNYNTNFPIQNQEISLEVLRQMPHFRHRSRLFRVIMKLRSALFFEIHKFFRRQGFINFSAPILTSNDGEGAGEVFIVDDENKDFFNKKTTLGVTGQLHAEAYALGFKKVYTFAPTFRAERSNTRRHAAEFWMIEPEVAFFTLEQIIELAVKLLQKVIKSVIIRNKDEFIFLEKAGDKNLRKRLLQFCDSQVTQISYEKAIELLLEHQEKFEEKDLFFGCDLKTEHERFLTEEIFHMPVVIINYPKNLKAFYMHQNEDGQTVAAFDLLVPGIGELIGGSQREVRYEKLLARMSELNMNIEEFQWYLDLRKYGNPGSSGFGLGFERLLMYITGIENIRDVIPFPRTSKNILM.

Belongs to the class-II aminoacyl-tRNA synthetase family. Homodimer.

Its subcellular location is the cytoplasm. It carries out the reaction tRNA(Asn) + L-asparagine + ATP = L-asparaginyl-tRNA(Asn) + AMP + diphosphate + H(+). This Mesomycoplasma hyopneumoniae (strain J / ATCC 25934 / NCTC 10110) (Mycoplasma hyopneumoniae) protein is Asparagine--tRNA ligase.